The chain runs to 127 residues: Fluoride-specific ion channel FluC 1 (127 aa).

Helical transmembrane passes span 4-24 (TLLA…LVSL), 35-55 (VGTL…LALF), 71-91 (TGFC…VYLI), and 101-121 (GTIL…FILV). Na(+) is bound by residues Gly-75 and Thr-78.

It belongs to the fluoride channel Fluc/FEX (TC 1.A.43) family.

It is found in the cell inner membrane. It carries out the reaction fluoride(in) = fluoride(out). With respect to regulation, na(+) is not transported, but it plays an essential structural role and its presence is essential for fluoride channel function. Its function is as follows. Fluoride-specific ion channel. Important for reducing fluoride concentration in the cell, thus reducing its toxicity. The polypeptide is Fluoride-specific ion channel FluC 1 (Yersinia pseudotuberculosis serotype I (strain IP32953)).